The following is a 336-amino-acid chain: Izumo sperm-egg fusion protein 1 (336 aa).

A signal peptide spans 1-16 (MTLPILLGWFLTLCSS). The 90-residue stretch at 158 to 247 (PPLDCGEHHL…LKDQKGTALS (90 aa)) folds into the Ig-like C2-type domain. Cysteine 179 and cysteine 236 are disulfide-bonded. Residues 287–307 (SFLTVLILLTVLSITGSLIII) traverse the membrane as a helical segment.

It belongs to the Izumo family. Forms a complex with tmem81 and spaca6 on spermatocyte cell membrane. The complex binds to oocyte protein bncr. As to expression, expressed in sperm.

It is found in the cell membrane. The protein resides in the cytoplasmic vesicle. It localises to the secretory vesicle. Its subcellular location is the acrosome membrane. Functionally, essential sperm cell-surface protein required for fertilization by acting as a ligand for bncr receptor on egg. The interaction of the complex izumo1:spaca6:tmemt81 with bncr is a necessary adhesion event between sperm and egg that is required for fertilization. In Danio rerio (Zebrafish), this protein is Izumo sperm-egg fusion protein 1.